The sequence spans 485 residues: N-succinylglutamate 5-semialdehyde dehydrogenase (485 aa).

220–225 (GSANTG) contacts NAD(+). Active-site residues include Glu243 and Cys278.

It belongs to the aldehyde dehydrogenase family. AstD subfamily.

It catalyses the reaction N-succinyl-L-glutamate 5-semialdehyde + NAD(+) + H2O = N-succinyl-L-glutamate + NADH + 2 H(+). Its pathway is amino-acid degradation; L-arginine degradation via AST pathway; L-glutamate and succinate from L-arginine: step 4/5. Functionally, catalyzes the NAD-dependent reduction of succinylglutamate semialdehyde into succinylglutamate. This chain is N-succinylglutamate 5-semialdehyde dehydrogenase, found in Aliivibrio salmonicida (strain LFI1238) (Vibrio salmonicida (strain LFI1238)).